Consider the following 125-residue polypeptide: Snaclec B7 (125 aa).

3 disulfide bridges follow: C2/C13, C30/C119, and C96/C111. Positions 9-120 constitute a C-type lectin domain; it reads HEGHCYKVFK…CNISQYFVCQ (112 aa). A glycan (N-linked (GlcNAc...) asparagine) is linked at N112.

It belongs to the snaclec family. As to quaternary structure, heterodimer; disulfide-linked. As to expression, expressed by the venom gland.

The protein localises to the secreted. In terms of biological role, interferes with one step of hemostasis (modulation of platelet aggregation, or coagulation cascade, for example). The polypeptide is Snaclec B7 (Macrovipera lebetinus (Levantine viper)).